An 85-amino-acid polypeptide reads, in one-letter code: Small ribosomal subunit protein uS17 (85 aa).

It belongs to the universal ribosomal protein uS17 family. Part of the 30S ribosomal subunit.

In terms of biological role, one of the primary rRNA binding proteins, it binds specifically to the 5'-end of 16S ribosomal RNA. In Trichlorobacter lovleyi (strain ATCC BAA-1151 / DSM 17278 / SZ) (Geobacter lovleyi), this protein is Small ribosomal subunit protein uS17.